The primary structure comprises 559 residues: 2-isopropylmalate synthase (559 aa).

A Pyruvate carboxyltransferase domain is found at 33-307 (PIWCSSDLRD…NPDLDFSDID (275 aa)). Residues Asp-42, His-246, His-248, and Asn-282 each contribute to the Mg(2+) site. The segment at 439–559 (ANTPYALVSH…SLSQPEAKAA (121 aa)) is regulatory domain.

The protein belongs to the alpha-IPM synthase/homocitrate synthase family. LeuA type 2 subfamily. Homodimer. Mg(2+) serves as cofactor.

It localises to the cytoplasm. The enzyme catalyses 3-methyl-2-oxobutanoate + acetyl-CoA + H2O = (2S)-2-isopropylmalate + CoA + H(+). Its pathway is amino-acid biosynthesis; L-leucine biosynthesis; L-leucine from 3-methyl-2-oxobutanoate: step 1/4. In terms of biological role, catalyzes the condensation of the acetyl group of acetyl-CoA with 3-methyl-2-oxobutanoate (2-ketoisovalerate) to form 3-carboxy-3-hydroxy-4-methylpentanoate (2-isopropylmalate). In Pseudomonas fluorescens (strain Pf0-1), this protein is 2-isopropylmalate synthase.